The chain runs to 242 residues: DNA repair protein RecO (242 aa).

This sequence belongs to the RecO family. In terms of assembly, monomer.

In terms of biological role, involved in DNA repair and RecF pathway recombination. The chain is DNA repair protein RecO from Salmonella enteritidis PT4 (strain P125109).